We begin with the raw amino-acid sequence, 282 residues long: Succinate dehydrogenase [ubiquinone] iron-sulfur subunit, mitochondrial (282 aa).

The transit peptide at 1–21 (MLRGSTSVCRSLELVTQAARY) directs the protein to the mitochondrion. In terms of domain architecture, 2Fe-2S ferredoxin-type spans 39–129 (EIYRFNPEEP…TTKIYPLPHM (91 aa)). Positions 89, 94, 97, and 109 each coordinate [2Fe-2S] cluster. Positions 172–202 (EQEKLDGLYECILCACCSASCPSYWWNADKY) constitute a 4Fe-4S ferredoxin-type domain. [4Fe-4S] cluster contacts are provided by Cys182, Cys185, and Cys188. [3Fe-4S] cluster is bound at residue Cys192. Residue Trp197 coordinates a rhodoquinol. Trp197 contributes to the a ubiquinone binding site. Residues Cys239 and Cys245 each coordinate [3Fe-4S] cluster. Residue Cys249 coordinates [4Fe-4S] cluster.

Belongs to the succinate dehydrogenase/fumarate reductase iron-sulfur protein family. Component of the mitochondrial electron transport chain complex II composed of four subunits: a flavoprotein (Fp), an iron-sulfur protein (Ip), and a large cytochrome b (CybL) subunit and a small cytochrome b (CybS) subunit. There are 2 developmental stage-specific forms of complex II which have the Ip and CybL subunits in common. Complex II from the free-living larvae (aerobic environment) acts as a succinate dehydrogenase and is composed of the common subunit Ip and CybL and the stage specific subunits FpL and CybSL. Complex II from parasitic larvae and adults (anaerobic environment) acts as a fumarate reductase and is composed of the common subunit Ip and CybL and the stage specific subunits FpA and CybSA. [2Fe-2S] cluster serves as cofactor. The cofactor is [3Fe-4S] cluster. [4Fe-4S] cluster is required as a cofactor. Expressed in adult muscles (at protein level).

It is found in the mitochondrion inner membrane. The enzyme catalyses a ubiquinone + succinate = a ubiquinol + fumarate. The catalysed reaction is a rhodoquinone + succinate = a rhodoquinol + fumarate. It functions in the pathway carbohydrate metabolism; tricarboxylic acid cycle; fumarate from succinate (eukaryal route): step 1/1. Inhibited by the fungicide flutolanil. Iron-sulfur protein (Ip) subunit of the mitochondrial electron transport chain complex II which, together with the flavoprotein (Fp) subunit forms the catalytic core of the complex. During the free-living egg-larvae stages, which occur in an aerobic environment, complex II acts as a succinate dehydrogenase by transferring electrons from succinate to ubiquinone. During the parasitic larvae and adult stages, which occur in an anaerobic environment, complex II acts as a fumarate reductase by transferring electrons from rhodoquinol to fumarate. The sequence is that of Succinate dehydrogenase [ubiquinone] iron-sulfur subunit, mitochondrial from Ascaris suum (Pig roundworm).